The primary structure comprises 590 residues: Muscarinic acetylcholine receptor M3 (590 aa).

Residues 1–67 (MTLHNNNTTS…DPLGGHTIWQ (67 aa)) lie on the Extracellular side of the membrane. N-linked (GlcNAc...) asparagine glycosylation is found at Asn6, Asn7, Asn15, Asn41, Asn48, and Asn53. A helical transmembrane segment spans residues 68–91 (VVFIAFLTGILALVTIIGNILVIV). Over 92–104 (AFKVNKQLKTVNN) the chain is Cytoplasmic. The chain crosses the membrane as a helical span at residues 105–130 (YFLLSLACADLIIGVISMNLFTTYII). The Extracellular portion of the chain corresponds to 131–142 (MNRWALGNLACD). An intrachain disulfide couples Cys141 to Cys221. The helical transmembrane segment at 143–164 (LWLSIDYVASNASVMNLLVISF) threads the bilayer. At 165–184 (DRYFSITRPLTYRAKRTTKR) the chain is on the cytoplasmic side. The helical transmembrane segment at 185–206 (AGVMIGLAWVISFILWAPAILF) threads the bilayer. The Extracellular segment spans residues 207–229 (WQYFVGKRTVPPGECFIQFLSEP). The chain crosses the membrane as a helical span at residues 230 to 252 (TITFGTAIAAFYMPVTIMTILYW). The Cytoplasmic segment spans residues 253-491 (RIYKETEKRT…SLIKEKKAAQ (239 aa)). The short motif at 275 to 281 (AEAENFV) is the Basolateral sorting signal element. The disordered stretch occupies residues 324–357 (AEQMDQDHSSSDSWNNNDAAASLENSASSDEEDI). Over residues 334–345 (SDSWNNNDAAAS) the composition is skewed to low complexity. Position 385 is a phosphoserine (Ser385). A helical transmembrane segment spans residues 492-514 (TLSAILLAFIITWTPYNIMVLVN). The Extracellular portion of the chain corresponds to 515 to 526 (TFCDSCIPKTYW). Residues Cys517 and Cys520 are joined by a disulfide bond. Residues 527 to 546 (NLGYWLCYINSTVNPVCYAL) form a helical membrane-spanning segment. Residues 547–590 (CNKTFRTTFKMLLLCQCDKRKRRKQQYQQRQSVIFHKRVPEQAL) are Cytoplasmic-facing.

Belongs to the G-protein coupled receptor 1 family. Muscarinic acetylcholine receptor subfamily. CHRM3 sub-subfamily. As to quaternary structure, homodimer; the dimers can form tetramers. Interacts with NALCN. Interacts with TMEM147.

The protein resides in the cell membrane. The protein localises to the postsynaptic cell membrane. It localises to the basolateral cell membrane. Its subcellular location is the endoplasmic reticulum membrane. The muscarinic acetylcholine receptor mediates various cellular responses, including inhibition of adenylate cyclase, breakdown of phosphoinositides and modulation of potassium channels through the action of G proteins. Primary transducing effect is Pi turnover. This chain is Muscarinic acetylcholine receptor M3 (CHRM3), found in Sus scrofa (Pig).